The primary structure comprises 234 residues: Sugar fermentation stimulation protein homolog (234 aa).

Belongs to the SfsA family.

The chain is Sugar fermentation stimulation protein homolog from Shewanella sp. (strain MR-4).